We begin with the raw amino-acid sequence, 274 residues long: Phosphatidylglycerol--prolipoprotein diacylglyceryl transferase (274 aa).

7 helical membrane-spanning segments follow: residues 22-42 (LSVR…MWLA), 61-81 (LLFY…VLFY), 96-116 (IWTG…AMVW), 125-145 (FFTV…VGRI), 177-197 (SQLY…NLFW), 204-224 (GAIS…VEFV), and 238-258 (ISMG…MIWV). R144 is a binding site for a 1,2-diacyl-sn-glycero-3-phospho-(1'-sn-glycerol).

The protein belongs to the Lgt family.

It localises to the cell inner membrane. It catalyses the reaction L-cysteinyl-[prolipoprotein] + a 1,2-diacyl-sn-glycero-3-phospho-(1'-sn-glycerol) = an S-1,2-diacyl-sn-glyceryl-L-cysteinyl-[prolipoprotein] + sn-glycerol 1-phosphate + H(+). It participates in protein modification; lipoprotein biosynthesis (diacylglyceryl transfer). In terms of biological role, catalyzes the transfer of the diacylglyceryl group from phosphatidylglycerol to the sulfhydryl group of the N-terminal cysteine of a prolipoprotein, the first step in the formation of mature lipoproteins. This is Phosphatidylglycerol--prolipoprotein diacylglyceryl transferase from Aeromonas hydrophila subsp. hydrophila (strain ATCC 7966 / DSM 30187 / BCRC 13018 / CCUG 14551 / JCM 1027 / KCTC 2358 / NCIMB 9240 / NCTC 8049).